The sequence spans 1623 residues: Histone-lysine N-methyltransferase set-9 (1623 aa).

Disordered stretches follow at residues 1 to 102, 112 to 131, 198 to 227, 448 to 600, and 645 to 781; these read MADG…APQQ, AADARPLTEQEQLAAERPTE, EDAVGPGSPGTQYRRNQQAGGGLPSTSVAS, QRPG…VLRP, and TGQS…DEAA. Basic and acidic residues predominate over residues 62 to 71; the sequence is HQMENQEFYH. Residues 77-100 are compositionally biased toward low complexity; sequence EPQQIPQIPVFQPAAYNPPNYVAP. Residues 206-227 show a composition bias toward polar residues; that stretch reads PGTQYRRNQQAGGGLPSTSVAS. Basic and acidic residues predominate over residues 554 to 573; it reads MTQEEKNAHFARLTTDKEKP. Positions 587 to 597 are enriched in pro residues; it reads PHVPPPPPPLV. The span at 645-669 shows a compositional bias: polar residues; that stretch reads TGQSGSSAAARQRTVSGSAARAQTY. A compositionally biased stretch (basic residues) spans 723 to 733; it reads HRPRGRPKGTR. The span at 772–781 shows a compositional bias: acidic residues; the sequence is SESEGIDEAA. Residues 786-834 form a PHD-type zinc finger; that stretch reads TMRCHCGMDHGDGDTIECEGCKTWQHMACMGLTLKSNTSKYKCEMCLPR. The tract at residues 857–895 is disordered; the sequence is AARKQKRKSEPVEQKQKSSQPSTSRKSAPMALQQPAEPR. The span at 873–882 shows a compositional bias: polar residues; it reads KSSQPSTSRK. Positions 965–1056 constitute an SET domain; the sequence is MSSEVKRQPG…RNTEVTLPFD (92 aa). Basic and acidic residues-rich tracts occupy residues 1089-1157 and 1172-1194; these read AERH…KKME and AREERRIQQAEEMFRRQEEEGKR. 2 disordered regions span residues 1089-1318 and 1356-1623; these read AERH…NVAP and LLAG…TRWN. Residues 1093–1201 adopt a coiled-coil conformation; that stretch reads RAMDHKKQEA…GKRKEARRRS (109 aa). The span at 1242–1252 shows a compositional bias: polar residues; the sequence is TTQPSTSSFAT. A compositionally biased stretch (low complexity) spans 1282–1293; sequence ATTVATPKATTA. Positions 1364-1401 form a coiled coil; sequence FSEVRAQIEEENRMKERSRKREAKKKAVEKEKKEHRKE. 4 stretches are compositionally biased toward basic and acidic residues: residues 1365–1378, 1388–1406, 1413–1429, and 1447–1464; these read SEVRAQIEEENRMK, KKAVEKEKKEHRKEPKKTN, KSEKAVEKAVEKVEKKP, and KKTEEVDGIEREASESSS. Residues 1533–1544 show a composition bias toward polar residues; that stretch reads SSSNTAPTTTIA.

The protein belongs to the class V-like SAM-binding methyltransferase superfamily. Predominantly expressed in the germline (at protein level).

Its subcellular location is the nucleus. It carries out the reaction L-lysyl-[histone] + S-adenosyl-L-methionine = N(6)-methyl-L-lysyl-[histone] + S-adenosyl-L-homocysteine + H(+). In terms of biological role, histone methyltransferase. Might play a role in transcriptional regulation. Together with set-26, negatively regulates lifespan in a germline-independent, partially daf-16-dependent fashion. Together with set-26, plays a role in germline development and maintenance and might play a role in the restriction of the trimethylation mark on histone H3 'Lys-4'(H3K4me3) to target genes specifically in the germline. This chain is Histone-lysine N-methyltransferase set-9, found in Caenorhabditis elegans.